The primary structure comprises 330 residues: Phosphate acyltransferase (330 aa).

The protein belongs to the PlsX family. As to quaternary structure, homodimer. Probably interacts with PlsY.

It localises to the cytoplasm. It catalyses the reaction a fatty acyl-[ACP] + phosphate = an acyl phosphate + holo-[ACP]. Its pathway is lipid metabolism; phospholipid metabolism. In terms of biological role, catalyzes the reversible formation of acyl-phosphate (acyl-PO(4)) from acyl-[acyl-carrier-protein] (acyl-ACP). This enzyme utilizes acyl-ACP as fatty acyl donor, but not acyl-CoA. In Lysinibacillus sphaericus (strain C3-41), this protein is Phosphate acyltransferase.